The chain runs to 554 residues: MVKVSLDNVKLLVDVDKEPFFKPSSTTVGDILTKDALEFIVLLHRTFNNKRKQLLENRQVVQKKLDSGSYHLDFLPETANIRNDPTWQGPILAPGLINRSTEITGPPLRNMLINALNAPVNTYMTDFEDSASPTWNNMVYGQVNLYDAIRNQIDFDTPRKSYKLNGNVANLPTIIVRPRGWHMVEKHLYVDDEPISASIFDFGLYFYHNAKELIKLGKGPYFYLPKMEHHLEAKLWNDVFCVAQDYIGIPRGTIRATVLIETLPAAFQMEEIIYQLRQHSSGLNCGRWDYIFSTIKRLRNDPNHILPNRNQVTMTSPFMDAYVKRLINTCHRRGVHAMGGMAAQIPIKDDPAANEKAMTKVRNDKIRELTNGHDGSWVAHPALAPICNEVFINMGTPNQIYFIPENVVTAANLLETKIPNGEITTEGIVQNLDIGLQYMEAWLRGSGCVPINNLMEDAATAEVSRCQLYQWVKHGVTLKDTGEKVTPELTEKILKEQVERLSKASPLGDKNKFALAAKYFLPEIRGEKFSEFLTTLLYDEIVSTKATPTDLSKL.

Arg-177 functions as the Proton acceptor in the catalytic mechanism. Asp-457 functions as the Proton donor in the catalytic mechanism. The SKL peroxisome targeting motif signature appears at Ser-552–Leu-554.

The protein belongs to the malate synthase family. Interacts with PEX9.

It is found in the peroxisome matrix. The catalysed reaction is glyoxylate + acetyl-CoA + H2O = (S)-malate + CoA + H(+). It participates in carbohydrate metabolism; glyoxylate cycle; (S)-malate from isocitrate: step 2/2. Malate synthase which takes part in the glyoxylate cycle. MLS1 activity is essential for cells to grow on oleic acid as a sole carbon source. Two steps of the glyoxylate cycle take place in the cytosol, the splitting of isocitrate into succinate and glyoxylate, and the dehydrogenation of malate to oxaloacetate. However, the formation of malate from glyoxylate and acetyl-CoA undertaken MLS1, occurs in the peroxisomes when cells are grown on oleic acid. The source of acetyl-CoA being either peroxisomal when breaking down fatty acids, or cytosolic when extra-cellular two-carbon substrates are used, therefore, although not strictly essential, the peroxisomal localization of MLS1 appears to be advantageous for cells growing on oleic acid, in that acetyl-CoA production and utilization are thereby intimately compartmentalized together to increase efficiency. The chain is Malate synthase 1 from Saccharomyces cerevisiae (strain ATCC 204508 / S288c) (Baker's yeast).